A 249-amino-acid polypeptide reads, in one-letter code: tRNA pseudouridine synthase A (249 aa).

Catalysis depends on D53, which acts as the Nucleophile. Residue Y111 participates in substrate binding.

This sequence belongs to the tRNA pseudouridine synthase TruA family. As to quaternary structure, homodimer.

It carries out the reaction uridine(38/39/40) in tRNA = pseudouridine(38/39/40) in tRNA. Formation of pseudouridine at positions 38, 39 and 40 in the anticodon stem and loop of transfer RNAs. In Streptococcus pneumoniae serotype 19F (strain G54), this protein is tRNA pseudouridine synthase A.